The primary structure comprises 266 residues: Esterase AGAP003155 (266 aa).

Residues S114, D172, and H199 each act as charge relay system in the active site. The segment at 231-266 (ATEENSFHLEGQEEAEESALQPVHEGLQNGSDSDSD) is disordered.

The protein belongs to the LovG family.

The chain is Esterase AGAP003155 from Anopheles gambiae (African malaria mosquito).